A 323-amino-acid chain; its full sequence is tRNA U34 carboxymethyltransferase (323 aa).

Carboxy-S-adenosyl-L-methionine contacts are provided by residues Lys91, Trp105, Lys110, Gly130, 180–181 (IE), Met196, Tyr200, and Arg315.

The protein belongs to the class I-like SAM-binding methyltransferase superfamily. CmoB family. As to quaternary structure, homotetramer.

It catalyses the reaction carboxy-S-adenosyl-L-methionine + 5-hydroxyuridine(34) in tRNA = 5-carboxymethoxyuridine(34) in tRNA + S-adenosyl-L-homocysteine + H(+). Its function is as follows. Catalyzes carboxymethyl transfer from carboxy-S-adenosyl-L-methionine (Cx-SAM) to 5-hydroxyuridine (ho5U) to form 5-carboxymethoxyuridine (cmo5U) at position 34 in tRNAs. This Geobacter sp. (strain M21) protein is tRNA U34 carboxymethyltransferase.